The sequence spans 406 residues: Peptidase T (406 aa).

Residue His81 coordinates Zn(2+). Asp83 is a catalytic residue. Residue Asp142 participates in Zn(2+) binding. The Proton acceptor role is filled by Glu176. Zn(2+) contacts are provided by Glu177, Asp199, and His381.

Belongs to the peptidase M20B family. Requires Zn(2+) as cofactor.

Its subcellular location is the cytoplasm. It carries out the reaction Release of the N-terminal residue from a tripeptide.. Functionally, cleaves the N-terminal amino acid of tripeptides. This is Peptidase T from Streptococcus suis (strain 98HAH33).